The sequence spans 129 residues: MGDFLFPIDSGAALAIHVALSAGIVAAIIGVAAVLREKRAGARPDTPYEGGVLPAAPPQGPQNAPYFLIAALFVIFDMEAAILFAWAVAAREAGWVGLIEAAIFIGVLLLALVYLWIDGALDWGPGERK.

Transmembrane regions (helical) follow at residues 14-34, 67-87, and 97-117; these read LAIH…VAAV, FLIA…FAWA, and GLIE…YLWI.

This sequence belongs to the complex I subunit 3 family. NDH-1 is composed of 14 different subunits. Subunits NuoA, H, J, K, L, M, N constitute the membrane sector of the complex.

It is found in the cell inner membrane. It catalyses the reaction a quinone + NADH + 5 H(+)(in) = a quinol + NAD(+) + 4 H(+)(out). NDH-1 shuttles electrons from NADH, via FMN and iron-sulfur (Fe-S) centers, to quinones in the respiratory chain. The immediate electron acceptor for the enzyme in this species is believed to be ubiquinone. Couples the redox reaction to proton translocation (for every two electrons transferred, four hydrogen ions are translocated across the cytoplasmic membrane), and thus conserves the redox energy in a proton gradient. The sequence is that of NADH-quinone oxidoreductase subunit A from Rhodopseudomonas palustris (strain BisB18).